The sequence spans 791 residues: RAS guanyl-releasing protein 1 (791 aa).

The N-terminal Ras-GEF domain occupies 49 to 172; the sequence is LGKLSKGASL…RLIDTAQINS (124 aa). The interval 53–106 is ras exchanger motif region; required for transforming activity; sequence SKGASLDELIQMCIQAFDLDGNMGQNNELLQIMLTMHGFLIPSTELLIKLRTLY. The Ras-GEF domain occupies 201 to 432; that stretch reads EPQELAEHLT…YELSYAREPR (232 aa). EF-hand domains are found at residues 466–501 and 502–528; these read HVQR…FPFS and FCVM…ASSI. The Ca(2+) site is built by aspartate 479, aspartate 481, aspartate 483, tyrosine 485, glutamate 490, aspartate 506, aspartate 508, glutamate 510, and glutamate 517. The Phorbol-ester/DAG-type zinc-finger motif lies at 537-587; that stretch reads LHNFQETTYLRPTFCDNCAGFLWGVIKQGYRCKDCGMNCHKQCKELVVFEC. The interval 671–715 is disordered; it reads TQTENETQSLCLQVPSPPRSRTPDLTSHLPISPMPSPCPSPVPTR. Positions 672 to 681 are enriched in polar residues; it reads QTENETQSLC. Over residues 702–712 the composition is skewed to pro residues; that stretch reads SPMPSPCPSPV. The stretch at 728–783 forms a coiled coil; the sequence is IRKARAELRGGKAGIQELEKEKVFLKEENTALKIQLKDAHRRVETLRAELRKYVLD.

Belongs to the RASGRP family.

Its subcellular location is the cytoplasm. It is found in the cytosol. The protein resides in the cell membrane. It localises to the golgi apparatus membrane. The protein localises to the endoplasmic reticulum membrane. Its activity is regulated as follows. Regulated by F-actin polymerization and probably by calcium. Functions as a diacylglycerol (DAG)-regulated nucleotide exchange factor specifically activating Ras through the exchange of bound GDP for GTP. This chain is RAS guanyl-releasing protein 1 (rasgrp1), found in Xenopus laevis (African clawed frog).